The primary structure comprises 1149 residues: Probable phospholipid-transporting ATPase IA (1149 aa).

Topologically, residues 1-65 (MPTMRRTVSE…TAKYNIITFL (65 aa)) are cytoplasmic. Phosphoserine is present on Ser-25. Position 28 is a phosphothreonine (Thr-28). Ser-29 is subject to Phosphoserine. Residues 66–86 (PRFLYSQFRRAANSFFLFIAL) form a helical membrane-spanning segment. Residues 87–92 (LQQIPD) are Extracellular-facing. Residues 93–115 (VSPTGRYTTLVPLLFILAVAAIK) form a helical membrane-spanning segment. At 116–297 (EIIEDIKRHK…SNVERITNVQ (182 aa)) the chain is on the cytoplasmic side. Residues 298–319 (ILILFCILIAMSLVCSVGSAIW) form a helical membrane-spanning segment. Topologically, residues 320–344 (NRRHSGRDWYLNLNYGGANNFGLNF) are extracellular. A helical transmembrane segment spans residues 345–366 (LTFIILFNNLIPISLLVTLEVV). The Cytoplasmic segment spans residues 367–842 (KFTQAYFINW…GAWNYNRGSK (476 aa)). The active-site 4-aspartylphosphate intermediate is Asp-409. Residues Asp-409, Lys-410, Thr-411, Glu-493, Phe-534, Lys-557, Arg-590, Thr-670, Gly-671, Asp-672, 726–733 (ALIIDGKT), Arg-760, and Lys-766 each bind ATP. Asp-409 lines the Mg(2+) pocket. Thr-411 is a Mg(2+) binding site. Mg(2+) is bound at residue Asp-786. 2 residues coordinate ATP: Asn-789 and Asp-790. Asp-790 is a Mg(2+) binding site. The helical transmembrane segment at 843 to 863 (CILYCFYKNIVLYIIEIWFAF) threads the bilayer. Residues 864–875 (VNGFSGQILFER) lie on the Extracellular side of the membrane. Residues 876–895 (WCIGLYNVMFTAMPPLTLGI) traverse the membrane as a helical segment. Topologically, residues 896-925 (FERSCRKEYMLKYPELYKTSQNALDFNTKV) are cytoplasmic. A helical transmembrane segment spans residues 926-947 (FWVHCLNGLFHSVILFWFPLKA). The Extracellular segment spans residues 948 to 961 (LQYGTVFENGRTSD). A helical membrane pass occupies residues 962–984 (YLLLGNFVYTFVVITVCLKAGLE). Residues 985 to 990 (TSYWTW) are Cytoplasmic-facing. Residues 991 to 1011 (FSHIAIWGSIALWVVFFGIYS) form a helical membrane-spanning segment. Over 1012–1029 (SLWPAVPMAPDMSGEAAM) the chain is Extracellular. The helical transmembrane segment at 1030–1055 (LFSSGVFWMGLLFIPVASLLLDVVYK) threads the bilayer. Residues 1056 to 1149 (VIKRTAFKTL…DTTKQRPDEW (94 aa)) are Cytoplasmic-facing. 1080–1087 (GAVVLGKS) serves as a coordination point for ATP. Ser-1111 carries the post-translational modification Phosphoserine.

It belongs to the cation transport ATPase (P-type) (TC 3.A.3) family. Type IV subfamily. In terms of assembly, component of a P4-ATPase flippase complex which consists of a catalytic alpha subunit and an accessory beta subunit. Interacts with TMEM30A to form a flippase complex; this complex forms an intermediate phosphoenzyme. Interacts with TMEM30B; this interaction is reported conflictingly. Mg(2+) is required as a cofactor. Cleaved by calpain in a caspase- and calcium influx-dependent manner during platelet apoptosis leading to a 100 kDa polypeptide. In terms of tissue distribution, kidney.

Its subcellular location is the cytoplasmic vesicle. The protein resides in the secretory vesicle. The protein localises to the chromaffin granule membrane. It localises to the cytoplasmic granule. It is found in the cell membrane. Its subcellular location is the endoplasmic reticulum. The protein resides in the golgi apparatus. The enzyme catalyses ATP + H2O + phospholipidSide 1 = ADP + phosphate + phospholipidSide 2.. It catalyses the reaction a 1,2-diacyl-sn-glycero-3-phospho-L-serine(out) + ATP + H2O = a 1,2-diacyl-sn-glycero-3-phospho-L-serine(in) + ADP + phosphate + H(+). Catalytic component of a P4-ATPase flippase complex which catalyzes the hydrolysis of ATP coupled to the transport of aminophospholipids from the outer to the inner leaflet of various membranes and ensures the maintenance of asymmetric distribution of phospholipids. Phospholipid translocation also seems to be implicated in vesicle formation and in uptake of lipid signaling molecules. In vitro, its ATPase activity is selectively and stereospecifically stimulated by phosphatidylserine (PS). The flippase complex ATP8A1:TMEM30A seems to play a role in regulation of cell migration probably involving flippase-mediated translocation of phosphatidylethanolamine (PE) at the cell membrane. Acts as aminophospholipid translocase at the cell membrane in neuronal cells. In Bos taurus (Bovine), this protein is Probable phospholipid-transporting ATPase IA.